The following is a 168-amino-acid chain: Small ribosomal subunit protein uS5 (168 aa).

The S5 DRBM domain maps to 13-76 (LEENVVAINR…EDAKRKLITV (64 aa)).

It belongs to the universal ribosomal protein uS5 family. As to quaternary structure, part of the 30S ribosomal subunit. Contacts proteins S4 and S8.

Functionally, with S4 and S12 plays an important role in translational accuracy. Located at the back of the 30S subunit body where it stabilizes the conformation of the head with respect to the body. The polypeptide is Small ribosomal subunit protein uS5 (Leuconostoc mesenteroides subsp. mesenteroides (strain ATCC 8293 / DSM 20343 / BCRC 11652 / CCM 1803 / JCM 6124 / NCDO 523 / NBRC 100496 / NCIMB 8023 / NCTC 12954 / NRRL B-1118 / 37Y)).